The following is a 550-amino-acid chain: Undecaprenyl phosphate-alpha-4-amino-4-deoxy-L-arabinose arabinosyl transferase 2 (550 aa).

11 helical membrane passes run 4–24, 81–101, 110–132, 176–196, 204–224, 255–275, 288–308, 313–333, 348–368, 381–401, and 409–429; these read LKPG…PLSF, FAVH…VYWL, WLGL…GTYA, FMTK…PWVI, VFIY…PWVI, APFW…LGLL, TQSG…FFSL, LPTY…RYAA, LLFG…WGLA, VLLG…TLRA, and AALC…QQVI.

This sequence belongs to the glycosyltransferase 83 family.

The protein localises to the cell inner membrane. The catalysed reaction is 4-amino-4-deoxy-alpha-L-arabinopyranosyl di-trans,octa-cis-undecaprenyl phosphate + lipid IVA = lipid IIA + di-trans,octa-cis-undecaprenyl phosphate.. The protein operates within lipopolysaccharide metabolism; 4-amino-4-deoxy-beta-L-arabinose-lipid A biosynthesis. In terms of biological role, catalyzes the transfer of the L-Ara4N moiety of the glycolipid undecaprenyl phosphate-alpha-L-Ara4N to lipid A. The modified arabinose is attached to lipid A and is required for resistance to polymyxin and cationic antimicrobial peptides. The chain is Undecaprenyl phosphate-alpha-4-amino-4-deoxy-L-arabinose arabinosyl transferase 2 from Sodalis glossinidius (strain morsitans).